A 314-amino-acid chain; its full sequence is Solute carrier family 25 member 44 (314 aa).

Solcar repeat units lie at residues 18–100, 107–210, and 220–302; these read KKFY…TRKF, SNTV…YAEQ, and PHIV…LKKL. 6 helical membrane-spanning segments follow: residues 20 to 42, 71 to 90, 113 to 133, 185 to 201, 222 to 239, and 278 to 296; these read FYVFGVAMTMMIRVSVYPFTLIR, TGLYRGFLVNTFTLISGQCY, LVAGGSASLVAQSITVPIDVV, GYVASLLTYIPNSAVWW, IVFQAVSGPLAAATASIL, and LSARIISATPSTIVIVVGY.

Belongs to the mitochondrial carrier (TC 2.A.29) family.

It localises to the mitochondrion membrane. The catalysed reaction is L-valine(in) = L-valine(out). The enzyme catalyses L-leucine(in) = L-leucine(out). Mitochondrial solute transporter which transports branched-chain amino acid (BCAA; valine, leucine and isoleucine) into mitochondria in brown adipose tissue (BAT). BAT is involved in BCAA catabolism and actively utilizes BCAA in the mitochondria for thermogenesis. The chain is Solute carrier family 25 member 44 from Homo sapiens (Human).